The sequence spans 204 residues: Ribosomal RNA small subunit methyltransferase G (204 aa).

Residues glycine 69, phenylalanine 74, 123–124 (IE), and arginine 137 each bind S-adenosyl-L-methionine.

The protein belongs to the methyltransferase superfamily. RNA methyltransferase RsmG family.

The protein resides in the cytoplasm. It catalyses the reaction guanosine(527) in 16S rRNA + S-adenosyl-L-methionine = N(7)-methylguanosine(527) in 16S rRNA + S-adenosyl-L-homocysteine. Specifically methylates the N7 position of guanine in position 527 of 16S rRNA. The polypeptide is Ribosomal RNA small subunit methyltransferase G (Ruegeria pomeroyi (strain ATCC 700808 / DSM 15171 / DSS-3) (Silicibacter pomeroyi)).